A 208-amino-acid polypeptide reads, in one-letter code: Small ribosomal subunit protein uS9c (208 aa).

The N-terminal 52 residues, 1–52, are a transit peptide targeting the chloroplast; sequence MASITNLASSLSSLSFSSQVSQRPNTISFPRANSVFALPAKSARRASLSITA.

Belongs to the universal ribosomal protein uS9 family.

The protein localises to the plastid. It localises to the chloroplast. In terms of biological role, binds directly to 16S ribosomal RNA. This is Small ribosomal subunit protein uS9c (RPS9) from Arabidopsis thaliana (Mouse-ear cress).